Here is a 470-residue protein sequence, read N- to C-terminus: Uronate isomerase (470 aa).

The protein belongs to the metallo-dependent hydrolases superfamily. Uronate isomerase family.

The catalysed reaction is D-glucuronate = D-fructuronate. It carries out the reaction aldehydo-D-galacturonate = keto-D-tagaturonate. It participates in carbohydrate metabolism; pentose and glucuronate interconversion. The polypeptide is Uronate isomerase (Salmonella agona (strain SL483)).